Reading from the N-terminus, the 337-residue chain is UDP-3-O-acylglucosamine N-acyltransferase (337 aa).

The Proton acceptor role is filled by His-238.

Belongs to the transferase hexapeptide repeat family. LpxD subfamily. In terms of assembly, homotrimer.

The catalysed reaction is a UDP-3-O-[(3R)-3-hydroxyacyl]-alpha-D-glucosamine + a (3R)-hydroxyacyl-[ACP] = a UDP-2-N,3-O-bis[(3R)-3-hydroxyacyl]-alpha-D-glucosamine + holo-[ACP] + H(+). It functions in the pathway bacterial outer membrane biogenesis; LPS lipid A biosynthesis. Functionally, catalyzes the N-acylation of UDP-3-O-acylglucosamine using 3-hydroxyacyl-ACP as the acyl donor. Is involved in the biosynthesis of lipid A, a phosphorylated glycolipid that anchors the lipopolysaccharide to the outer membrane of the cell. The protein is UDP-3-O-acylglucosamine N-acyltransferase of Xanthomonas campestris pv. campestris (strain 8004).